We begin with the raw amino-acid sequence, 526 residues long: Thioredoxin reductase 2, mitochondrial (526 aa).

Residues methionine 1–alanine 36 constitute a mitochondrion transit peptide. An FAD-binding site is contributed by aspartate 43–tyrosine 72. N6-succinyllysine is present on lysine 81. Cysteine 88 and cysteine 93 are disulfide-bonded. N6-succinyllysine is present on residues lysine 177 and lysine 331. Histidine 499 (proton acceptor) is an active-site residue. Positions cysteine 524–selenocysteine 525 form a cross-link, cysteinyl-selenocysteine (Cys-Sec). Residue selenocysteine 525 is a non-standard amino acid, selenocysteine.

Belongs to the class-I pyridine nucleotide-disulfide oxidoreductase family. As to quaternary structure, homodimer. FAD is required as a cofactor. In terms of tissue distribution, expressed in liver, kidney, adrenal gland and heart.

It localises to the mitochondrion. It carries out the reaction [thioredoxin]-dithiol + NADP(+) = [thioredoxin]-disulfide + NADPH + H(+). Its function is as follows. Involved in the control of reactive oxygen species levels and the regulation of mitochondrial redox homeostasis. Maintains mitochondrial thioredoxin in a reduced state. May play a role in redox-regulated cell signaling. The chain is Thioredoxin reductase 2, mitochondrial (Txnrd2) from Rattus norvegicus (Rat).